Reading from the N-terminus, the 502-residue chain is ATP synthase subunit alpha (502 aa).

169–176 (GDRQTGKT) is an ATP binding site.

It belongs to the ATPase alpha/beta chains family. F-type ATPases have 2 components, CF(1) - the catalytic core - and CF(0) - the membrane proton channel. CF(1) has five subunits: alpha(3), beta(3), gamma(1), delta(1), epsilon(1). CF(0) has three main subunits: a(1), b(2) and c(9-12). The alpha and beta chains form an alternating ring which encloses part of the gamma chain. CF(1) is attached to CF(0) by a central stalk formed by the gamma and epsilon chains, while a peripheral stalk is formed by the delta and b chains.

It is found in the cell inner membrane. The catalysed reaction is ATP + H2O + 4 H(+)(in) = ADP + phosphate + 5 H(+)(out). Its function is as follows. Produces ATP from ADP in the presence of a proton gradient across the membrane. The alpha chain is a regulatory subunit. The polypeptide is ATP synthase subunit alpha (Pelobacter propionicus (strain DSM 2379 / NBRC 103807 / OttBd1)).